The sequence spans 107 residues: U1-lycotoxin-Ls1c (107 aa).

The first 20 residues, Met-1–Ser-20, serve as a signal peptide directing secretion. Residues Glu-21–Arg-41 constitute a propeptide that is removed on maturation. 4 disulfide bridges follow: Cys-44–Cys-59, Cys-51–Cys-68, Cys-58–Cys-86, and Cys-70–Cys-84.

Belongs to the neurotoxin 19 (CSTX) family. 04 (U1-Lctx) subfamily. As to expression, expressed by the venom gland.

It is found in the secreted. The polypeptide is U1-lycotoxin-Ls1c (Lycosa singoriensis (Wolf spider)).